The sequence spans 682 residues: MTSPASGVPEPADPKARLAELVERLAAADAAYYRDDAPIMDDAAYDALRREAESLRAAHPDLAAALDQVGAAPSGAFGKVRHRLPMLSLDNVFEPADFVEFCASIRRFLGLGAAPLAFVAEPKIDGLSISLTYENRRFVRGATRGDGTEGEDVTENLRTLRELPATLPDDAPDFIEIRGEVYMTKTDFITLNQGQARQFANPRNAAAGSLRQLDPAVTASRRLSLFAYARGAASQAVGETHWDYLAILRRWGFPVNPLAERVSEAGAEPFQRSIGERRAGLDYDIDGVVYKIDDLALQERLGFAGRAPRWAVAWKFPAERALTTLLGIDIQVGRTGALTPRARLDPVNVGGVLVSHATLHNEDEIARKDVRIGDTVELQRAGDVIPQILRALPERRPADSVPFVFPDHCPVCGALAIRPAGEVVRRCTGGLSCPAQVVERLIHFCSRLAFDIEGMGEKTVQEFHGLGWLESPADIFTLRDREAAIAALEGWGEVSARKLIAAIDARRRISLARFIYALGIRRIGEQNAKLLARHYSSYAVWRRQMEEAGVIGSDARLELGSISGIGPSIAEELAGFFAEPHNRDLLDRLVPMLTIEDEVAAAGGALAGKTIVFTGTLESLTRPEAKARAEALGARVTESVSKKTDFVVVGADAGSKAAKAASLGVTVLSEAEFRSLAGLPPG.

NAD(+)-binding positions include 42-46 (DAAYD), 88-89 (SL), and E121. K123 functions as the N6-AMP-lysine intermediate in the catalytic mechanism. NAD(+) contacts are provided by R144, E180, K291, and K315. Zn(2+)-binding residues include C409, C412, C427, and C433. One can recognise a BRCT domain in the interval 601-682 (AAGGALAGKT…FRSLAGLPPG (82 aa)).

Belongs to the NAD-dependent DNA ligase family. LigA subfamily. It depends on Mg(2+) as a cofactor. Mn(2+) is required as a cofactor.

It catalyses the reaction NAD(+) + (deoxyribonucleotide)n-3'-hydroxyl + 5'-phospho-(deoxyribonucleotide)m = (deoxyribonucleotide)n+m + AMP + beta-nicotinamide D-nucleotide.. In terms of biological role, DNA ligase that catalyzes the formation of phosphodiester linkages between 5'-phosphoryl and 3'-hydroxyl groups in double-stranded DNA using NAD as a coenzyme and as the energy source for the reaction. It is essential for DNA replication and repair of damaged DNA. The protein is DNA ligase of Acidiphilium cryptum (strain JF-5).